A 179-amino-acid polypeptide reads, in one-letter code: Replication restart protein DnaT (179 aa).

Residues 151-168 (SRSSNGGMPQRDINSVSE) show a composition bias toward polar residues. A disordered region spans residues 151-179 (SRSSNGGMPQRDINSVSEPDNHIPPGFRG).

Belongs to the DnaT family. As to quaternary structure, homooligomerizes. Interacts with PriB. Component of the replication restart primosome. Primosome assembly occurs via a 'hand-off' mechanism. PriA binds to replication forks, subsequently PriB then DnaT bind; DnaT then displaces ssDNA to generate the helicase loading substrate.

Its function is as follows. Involved in the restart of stalled replication forks, which reloads the replicative helicase on sites other than the origin of replication. Can function in multiple replication restart pathways. Displaces ssDNA from a PriB-ssDNA complex. Probably forms a spiral filament on ssDNA. The sequence is that of Replication restart protein DnaT from Salmonella heidelberg (strain SL476).